A 215-amino-acid chain; its full sequence is SAGA complex/transcription factor TFIID complex subunit Taf10 (215 aa).

A disordered region spans residues 1-77 (MSDINNNEPA…SRERHGSNYV (77 aa)). Residues 23–42 (GNNSMSVDEQPETSSTNLPT) are compositionally biased toward polar residues. Positions 58 to 73 (NNEDSPKSDDSRERHG) are enriched in basic and acidic residues. In terms of domain architecture, Histone-fold spans 58-203 (NNEDSPKSDD…VDDLSAALNE (146 aa)).

Belongs to the TAF10 family. In terms of assembly, component of the 1.8 MDa SAGA (Spt-Ada-Gcn5 acetyltransferase) complex, which is composed of 19 subunits tra1, spt7, taf5, ngg1/ada3, sgf73, spt20, spt8, taf12, taf6, hfi1/ada1, ubp8, gcn5, ada2, spt3, sgf29, taf10, taf9, sgf11 and sus1. The SAGA complex is composed of 4 modules, namely the HAT (histone acetyltransferase) module (gcn5, ada2, ngg1/ada3 and sgf29), the DUB (deubiquitinating) module (ubp8, sgf11, sgf73 and sus1), the core or TAF (TBP-associated factor) module (taf5, taf6, taf9, taf10 and taf12), and the Tra1 or SPT (Suppressor of Ty) module (tra1, hfi1/ada1, spt3, spt7, spt8 and spt20). The Tra1/SPT module binds activators, the core module recruits TBP (TATA-binding protein), the HAT module contains the histone H3 acetyltransferase gcn5, and the DUB module comprises the histone H2B deubiquitinase ubp8. Component of the 1.2 MDa TFIID complex, which is composed of TATA-binding protein (TBP) and the 14 TBP-associated factors (TAFs). It comprises 1 copy of each taf1, taf2, taf3, taf7, taf8, taf11, taf13, 2 copies of each taf4, taf5, taf6, taf9, taf10, taf12, and 3 copies of taf14. In TFIID, taf10 heterodimerizes with taf3 and taf8.

The protein resides in the nucleus. In terms of biological role, functions as a component of both the DNA-binding general transcription initiation factor complex TFIID and the transcription coactivator SAGA complex. Binding of TFIID to a promoter (with or without TATA element) is the initial step in pre-initiation complex (PIC) formation. TFIID plays a key role in the regulation of gene expression by RNA polymerase II through different activities such as transcription activator interaction, core promoter recognition and selectivity, TFIIA and TFIIB interaction, chromatin modification (histone acetylation by TAF1), facilitation of DNA opening and initiation of transcription. SAGA acts as a general cofactor required for essentially all RNA polymerase II transcription. At the promoters, SAGA is required for transcription pre-initiation complex (PIC) recruitment. It influences RNA polymerase II transcriptional activity through different activities such as TBP interaction (via core/TAF module) and promoter selectivity, interaction with transcription activators (via Tra1/SPT module), and chromatin modification through histone acetylation (via HAT module) and deubiquitination (via DUB module). SAGA preferentially acetylates histones H3 (to form H3K9ac, H3K14ac, H3K18ac and H3K23ac) and H2B and deubiquitinates histone H2B. SAGA interacts with DNA via upstream activating sequences (UASs). The chain is SAGA complex/transcription factor TFIID complex subunit Taf10 from Schizosaccharomyces pombe (strain 972 / ATCC 24843) (Fission yeast).